We begin with the raw amino-acid sequence, 264 residues long: GTP cyclohydrolase FolE2 (264 aa).

Belongs to the GTP cyclohydrolase IV family.

It catalyses the reaction GTP + H2O = 7,8-dihydroneopterin 3'-triphosphate + formate + H(+). It participates in cofactor biosynthesis; 7,8-dihydroneopterin triphosphate biosynthesis; 7,8-dihydroneopterin triphosphate from GTP: step 1/1. In terms of biological role, converts GTP to 7,8-dihydroneopterin triphosphate. The sequence is that of GTP cyclohydrolase FolE2 from Akkermansia muciniphila (strain ATCC BAA-835 / DSM 22959 / JCM 33894 / BCRC 81048 / CCUG 64013 / CIP 107961 / Muc).